The sequence spans 279 residues: Ribonuclease Z (279 aa).

7 residues coordinate Zn(2+): H61, H63, D65, H66, H153, D176, and H240. The active-site Proton acceptor is the D65.

Belongs to the RNase Z family. Homodimer. Requires Zn(2+) as cofactor.

It carries out the reaction Endonucleolytic cleavage of RNA, removing extra 3' nucleotides from tRNA precursor, generating 3' termini of tRNAs. A 3'-hydroxy group is left at the tRNA terminus and a 5'-phosphoryl group is left at the trailer molecule.. In terms of biological role, zinc phosphodiesterase, which displays some tRNA 3'-processing endonuclease activity. Probably involved in tRNA maturation, by removing a 3'-trailer from precursor tRNA. This chain is Ribonuclease Z, found in Mycobacterium marinum (strain ATCC BAA-535 / M).